The primary structure comprises 588 residues: Protein POF1B (588 aa).

Coiled-coil stretches lie at residues 332–442 (STFS…VSET) and 502–530 (LHELTSLLEEKDSLIKRQSEELSKLRQEI).

In terms of assembly, interacts with nonmuscle actin.

Its subcellular location is the cell junction. The protein localises to the tight junction. Functionally, plays a key role in the organization of epithelial monolayers by regulating the actin cytoskeleton. May be involved in ovary development. The protein is Protein POF1B (POF1B) of Pongo abelii (Sumatran orangutan).